The following is a 240-amino-acid chain: UDP-2,3-diacylglucosamine hydrolase (240 aa).

Positions 8, 10, 41, 79, and 114 each coordinate Mn(2+). Residue Asn-79–Arg-80 coordinates substrate. Substrate-binding residues include Asp-122, Ser-160, Asn-164, Lys-167, and His-195. Residues His-195 and His-197 each contribute to the Mn(2+) site.

This sequence belongs to the LpxH family. It depends on Mn(2+) as a cofactor.

The protein localises to the cell inner membrane. The enzyme catalyses UDP-2-N,3-O-bis[(3R)-3-hydroxytetradecanoyl]-alpha-D-glucosamine + H2O = 2-N,3-O-bis[(3R)-3-hydroxytetradecanoyl]-alpha-D-glucosaminyl 1-phosphate + UMP + 2 H(+). The protein operates within glycolipid biosynthesis; lipid IV(A) biosynthesis; lipid IV(A) from (3R)-3-hydroxytetradecanoyl-[acyl-carrier-protein] and UDP-N-acetyl-alpha-D-glucosamine: step 4/6. Hydrolyzes the pyrophosphate bond of UDP-2,3-diacylglucosamine to yield 2,3-diacylglucosamine 1-phosphate (lipid X) and UMP by catalyzing the attack of water at the alpha-P atom. Involved in the biosynthesis of lipid A, a phosphorylated glycolipid that anchors the lipopolysaccharide to the outer membrane of the cell. The polypeptide is UDP-2,3-diacylglucosamine hydrolase (Yersinia pseudotuberculosis serotype O:1b (strain IP 31758)).